A 356-amino-acid chain; its full sequence is Thrombopoietin (356 aa).

The signal sequence occupies residues 1 to 21 (MELTDLLLAAMLLAVARLTLS). Disulfide bonds link cysteine 28–cysteine 172 and cysteine 50–cysteine 106. N-linked (GlcNAc...) asparagine glycans are attached at residues asparagine 197, asparagine 206, asparagine 235, asparagine 249, asparagine 256, asparagine 336, and asparagine 351. The segment at 291–356 (GGLPPSPSLA…PHPRNLSQET (66 aa)) is disordered. Residues 330-339 (PSTTMPNSTA) show a composition bias toward polar residues.

This sequence belongs to the EPO/TPO family. In terms of tissue distribution, found mainly in the liver, kidney and skeletal muscle.

Its subcellular location is the secreted. Its function is as follows. Lineage-specific cytokine affecting the proliferation and maturation of megakaryocytes from their committed progenitor cells. It acts at a late stage of megakaryocyte development. It may be the major physiological regulator of circulating platelets. The chain is Thrombopoietin (Thpo) from Mus musculus (Mouse).